The following is a 71-amino-acid chain: ATP synthase subunit c (71 aa).

2 consecutive transmembrane segments (helical) span residues 5–25 (VLAAGIAVLSGIGAGVGIGIA) and 46–66 (FFILGAALCETTAIYGLVMAF).

It belongs to the ATPase C chain family. As to quaternary structure, F-type ATPases have 2 components, F(1) - the catalytic core - and F(0) - the membrane proton channel. F(1) has five subunits: alpha(3), beta(3), gamma(1), delta(1), epsilon(1). F(0) has three main subunits: a(1), b(2) and c(10-14). The alpha and beta chains form an alternating ring which encloses part of the gamma chain. F(1) is attached to F(0) by a central stalk formed by the gamma and epsilon chains, while a peripheral stalk is formed by the delta and b chains.

It localises to the cell membrane. Its function is as follows. F(1)F(0) ATP synthase produces ATP from ADP in the presence of a proton or sodium gradient. F-type ATPases consist of two structural domains, F(1) containing the extramembraneous catalytic core and F(0) containing the membrane proton channel, linked together by a central stalk and a peripheral stalk. During catalysis, ATP synthesis in the catalytic domain of F(1) is coupled via a rotary mechanism of the central stalk subunits to proton translocation. Key component of the F(0) channel; it plays a direct role in translocation across the membrane. A homomeric c-ring of between 10-14 subunits forms the central stalk rotor element with the F(1) delta and epsilon subunits. In Clostridium beijerinckii (strain ATCC 51743 / NCIMB 8052) (Clostridium acetobutylicum), this protein is ATP synthase subunit c.